Consider the following 180-residue polypeptide: MKNFYDWIKEFVRDQGEFIAQQSGWLELERSSYAKLIAQTISHVLNGGSLLVSADSSRHWFLNYILSNLNPKDLKERPLLSVIDFNASSFYPKNDANLSLATIEMTYQNPMFWHVGKIENEGLKTILLSKIPSFLWLFEELKEDCLLLKEHDSLLDYKLLQLFKLFENALFSVLYNKVTL.

Positions 17, 27, 140, 143, and 176 each coordinate Ca(2+).

As to quaternary structure, forms dimers and homotetramers. Interacts with domains I and II (residues 1-112) of DnaA. In a crystal with domains I and II of DnaA HobA forms tetramers with DnaA fragments bound at the dimer interface of the tetramer. Ca(2+) serves as cofactor.

In terms of biological role, required for DNA replication initiation. Increases binding of DnaA to oriC region. This Helicobacter pylori (strain ATCC 700392 / 26695) (Campylobacter pylori) protein is DNA replication regulator protein HobA.